The chain runs to 396 residues: MSEDEAQFHGNYDDYVTYLKRRIRQLELQVRMLEADKERLERELSRLRSEMSRLRQPPAFAGSVIEVLDDDRAIVQNYNGPRFVVRIAPWIDKSKLRPGTRVALDQRTMAIIEILPASKDPAVLGFEVVERPNVTYNDIGGLKKQLQELREAIELPLKHPELFEEVGIDPPKGVLLYGPPGCGKTLMAKAIAHEVNATFIRVVGSELVRKYIGEGARLVHELFELAKEKAPTIIFIDEIDAIGAKRLDETTGGEREVNRTLMQLLAEMDGFDPRGNVKVIAATNRPDILDPALLRPGRFDRLIEVPLPDFEGRLEILKVHTRRMKLRGVDLRLIAELTEGASGADLKAIATEAGMFAIRERRTYVTQEDFLKAIDKVLGNEKKIIQQIMSHEVIYG.

Positions 16-57 (VTYLKRRIRQLELQVRMLEADKERLERELSRLRSEMSRLRQP) form a coiled coil. ATP contacts are provided by residues 181 to 186 (GCGKTL) and histidine 320. A docks into pockets in the proteasome alpha-ring to cause gate opening region spans residues 394–396 (IYG).

Belongs to the AAA ATPase family. As to quaternary structure, homohexamer. The hexameric complex has a two-ring architecture resembling a top hat that caps the 20S proteasome core at one or both ends. Upon ATP-binding, the C-terminus of PAN interacts with the alpha-rings of the proteasome core by binding to the intersubunit pockets.

The protein resides in the cytoplasm. Its function is as follows. ATPase which is responsible for recognizing, binding, unfolding and translocation of substrate proteins into the archaeal 20S proteasome core particle. Is essential for opening the gate of the 20S proteasome via an interaction with its C-terminus, thereby allowing substrate entry and access to the site of proteolysis. Thus, the C-termini of the proteasomal ATPase function like a 'key in a lock' to induce gate opening and therefore regulate proteolysis. Unfolding activity requires energy from ATP hydrolysis, whereas ATP binding alone promotes ATPase-20S proteasome association which triggers gate opening, and supports translocation of unfolded substrates. The chain is Proteasome-activating nucleotidase from Pyrococcus furiosus (strain ATCC 43587 / DSM 3638 / JCM 8422 / Vc1).